Here is an 863-residue protein sequence, read N- to C-terminus: Neuroligin-1 (863 aa).

Positions 1–45 are cleaved as a signal peptide; the sequence is MALPRCTWPNYVWRAVMACLVHRGLGAPLTLCMLGCLLQAGHVLS. The Extracellular segment spans residues 46 to 717; the sequence is QKLDDVDPLV…DQRDYSTELS (672 aa). Residue N109 is glycosylated (N-linked (GlcNAc...) (complex) asparagine). An intrachain disulfide couples C117 to C153. Positions 183–212 are disordered; sequence KGGPLTKKQTDDLGDNDGAEDEDIRDSGGP. The segment covering 194 to 206 has biased composition (acidic residues); that stretch reads DLGDNDGAEDEDI. N-linked (GlcNAc...) (complex) asparagine glycans are attached at residues N323 and N363. Intrachain disulfides connect C362–C373 and C532–C566. N-linked (GlcNAc...) asparagine glycosylation occurs at N567. The tract at residues 670-708 is disordered; it reads PSTDITFRPTRKNSVPVTSAFPTAKQDDPKQQPSPFSVD. Over residues 681-690 the composition is skewed to polar residues; sequence KNSVPVTSAF. Residues S703 and S706 are each glycosylated (O-linked (GalNAc...) serine). Residues 718–738 form a helical membrane-spanning segment; it reads VTIAVGASLLFLNILAFAALY. Residues 739–863 lie on the Cytoplasmic side of the membrane; that stretch reads YKKDKRRHDV…HPHSHSTTRV (125 aa). The segment at 842 to 863 is disordered; that stretch reads GGQNNTLPHPHPHPHSHSTTRV. Residues 851 to 863 are compositionally biased toward basic residues; that stretch reads PHPHPHSHSTTRV.

The protein belongs to the type-B carboxylesterase/lipase family. As to quaternary structure, interacts with neurexins NRXN1, NRXN2 and NRXN3. Interaction with neurexins is mediated by heparan sulfate glycan modification on neurexin. Interacts with NLGN3. Interacts with AIP1 and PDZRN3. Interacts (via its C-terminus) with DLG4/PSD-95 (via PDZ domain 3). Interacts with GOPC. Expressed in the blood vessel walls (at protein level). Highly expressed in brain through prenatal stages, and at lower levels in pancreas islet beta cells.

The protein localises to the cell membrane. It is found in the postsynaptic density. The protein resides in the synaptic cleft. Its subcellular location is the synaptic cell membrane. Its function is as follows. Cell surface protein involved in cell-cell-interactions via its interactions with neurexin family members. Plays a role in synapse function and synaptic signal transmission, and probably mediates its effects by recruiting and clustering other synaptic proteins. May promote the initial formation of synapses, but is not essential for this. In vitro, triggers the de novo formation of presynaptic structures. May be involved in specification of excitatory synapses. Required to maintain wakefulness quality and normal synchrony of cerebral cortex activity during wakefulness and sleep. The protein is involved in nervous system development. The protein is Neuroligin-1 (NLGN1) of Homo sapiens (Human).